A 165-amino-acid chain; its full sequence is S-(2-succino)cysteine N-acetyltransferase (165 aa).

Residues P3–R162 enclose the N-acetyltransferase domain.

It belongs to the acetyltransferase family.

The enzyme catalyses S-(2-succino)-L-cysteine + acetyl-CoA = N-acetyl-S-(2-succino)-L-cysteine + CoA + H(+). Its pathway is amino-acid biosynthesis; L-cysteine biosynthesis. Catalyzes the N-acetylation of S-(2-succino)cysteine. Is involved in a S-(2-succino)cysteine (2SC) degradation pathway that allows B.subtilis to grow on 2SC as a sole sulfur source, via its metabolization to cysteine. Moreover, 2SC is a toxic compound in B.subtilis at high exogenous concentrations, and this enzyme relieves 2SC toxicity via N-acetylation. The chain is S-(2-succino)cysteine N-acetyltransferase from Bacillus subtilis (strain 168).